Here is a 155-residue protein sequence, read N- to C-terminus: Gas vesicle protein K (155 aa).

The protein belongs to the gas vesicle GvpK family.

The protein resides in the gas vesicle. In terms of biological role, might be involved in nucleating gas vesicle formation. Gas vesicles (GV) are hollow, gas filled proteinaceous nanostructures. During planktonic growth they allow positioning of the organism at a favorable depth for light or nutrient acquisition. Functionally, cluster expression in E.coli (gvpA1-gvpA2-gvpC-gvpN-gvpJ-gvpK-gvpF-gvpG-gvpV-gvpW) allows cells to float and produces irregularly shaped gas vesicles. The polypeptide is Gas vesicle protein K (Nostoc sp. (strain PCC 7120 / SAG 25.82 / UTEX 2576)).